The primary structure comprises 159 residues: Phosphopantetheine adenylyltransferase (159 aa).

Ser9 provides a ligand contact to substrate. Residues Ser9–Phe10 and His17 contribute to the ATP site. Residues Lys41, Leu73, and Lys87 each contribute to the substrate site. ATP-binding positions include Gly88–Arg90, Glu98, and Tyr122–Ser128.

This sequence belongs to the bacterial CoaD family. In terms of assembly, homohexamer. It depends on Mg(2+) as a cofactor.

The protein resides in the cytoplasm. The enzyme catalyses (R)-4'-phosphopantetheine + ATP + H(+) = 3'-dephospho-CoA + diphosphate. Its pathway is cofactor biosynthesis; coenzyme A biosynthesis; CoA from (R)-pantothenate: step 4/5. Reversibly transfers an adenylyl group from ATP to 4'-phosphopantetheine, yielding dephospho-CoA (dPCoA) and pyrophosphate. In Streptomyces griseus subsp. griseus (strain JCM 4626 / CBS 651.72 / NBRC 13350 / KCC S-0626 / ISP 5235), this protein is Phosphopantetheine adenylyltransferase.